We begin with the raw amino-acid sequence, 533 residues long: Bifunctional purine biosynthesis protein PurH (533 aa).

The MGS-like domain occupies Met-1–Val-148.

This sequence belongs to the PurH family.

It carries out the reaction (6R)-10-formyltetrahydrofolate + 5-amino-1-(5-phospho-beta-D-ribosyl)imidazole-4-carboxamide = 5-formamido-1-(5-phospho-D-ribosyl)imidazole-4-carboxamide + (6S)-5,6,7,8-tetrahydrofolate. It catalyses the reaction IMP + H2O = 5-formamido-1-(5-phospho-D-ribosyl)imidazole-4-carboxamide. The protein operates within purine metabolism; IMP biosynthesis via de novo pathway; 5-formamido-1-(5-phospho-D-ribosyl)imidazole-4-carboxamide from 5-amino-1-(5-phospho-D-ribosyl)imidazole-4-carboxamide (10-formyl THF route): step 1/1. Its pathway is purine metabolism; IMP biosynthesis via de novo pathway; IMP from 5-formamido-1-(5-phospho-D-ribosyl)imidazole-4-carboxamide: step 1/1. The protein is Bifunctional purine biosynthesis protein PurH of Colwellia psychrerythraea (strain 34H / ATCC BAA-681) (Vibrio psychroerythus).